A 257-amino-acid chain; its full sequence is Imidazole glycerol phosphate synthase subunit HisF (257 aa).

Residues aspartate 11 and aspartate 130 contribute to the active site.

The protein belongs to the HisA/HisF family. Heterodimer of HisH and HisF.

It localises to the cytoplasm. It catalyses the reaction 5-[(5-phospho-1-deoxy-D-ribulos-1-ylimino)methylamino]-1-(5-phospho-beta-D-ribosyl)imidazole-4-carboxamide + L-glutamine = D-erythro-1-(imidazol-4-yl)glycerol 3-phosphate + 5-amino-1-(5-phospho-beta-D-ribosyl)imidazole-4-carboxamide + L-glutamate + H(+). It functions in the pathway amino-acid biosynthesis; L-histidine biosynthesis; L-histidine from 5-phospho-alpha-D-ribose 1-diphosphate: step 5/9. IGPS catalyzes the conversion of PRFAR and glutamine to IGP, AICAR and glutamate. The HisF subunit catalyzes the cyclization activity that produces IGP and AICAR from PRFAR using the ammonia provided by the HisH subunit. This Trichormus variabilis (strain ATCC 29413 / PCC 7937) (Anabaena variabilis) protein is Imidazole glycerol phosphate synthase subunit HisF.